Reading from the N-terminus, the 318-residue chain is Glycine--tRNA ligase alpha subunit (318 aa).

It belongs to the class-II aminoacyl-tRNA synthetase family. As to quaternary structure, tetramer of two alpha and two beta subunits.

Its subcellular location is the cytoplasm. The enzyme catalyses tRNA(Gly) + glycine + ATP = glycyl-tRNA(Gly) + AMP + diphosphate. The sequence is that of Glycine--tRNA ligase alpha subunit from Saccharophagus degradans (strain 2-40 / ATCC 43961 / DSM 17024).